The primary structure comprises 280 residues: Protein HEAT-INDUCED TAS1 TARGET 4 (280 aa).

The protein belongs to the heat induced plant HTT protein family. In terms of tissue distribution, expressed in seedlings, leaves, stems, inflorescences and siliques.

It localises to the cytoplasm. The protein localises to the nucleus. Mediates both basal and acquired thermotolerance. The polypeptide is Protein HEAT-INDUCED TAS1 TARGET 4 (Arabidopsis thaliana (Mouse-ear cress)).